Consider the following 157-residue polypeptide: Transmembrane protein 50A (157 aa).

Residue serine 2 is modified to N-acetylserine. At serine 2 the chain carries Phosphoserine. The next 4 membrane-spanning stretches (helical) occupy residues 26–46 (IAAG…AVMY), 58–78 (TCGV…NGQV), 95–115 (IWLF…MWIL), and 126–146 (VVYP…GGLV).

This sequence belongs to the UPF0220 family.

The protein localises to the membrane. The polypeptide is Transmembrane protein 50A (Tmem50a) (Mus musculus (Mouse)).